The chain runs to 517 residues: General transcription factor IIF subunit 1 (517 aa).

Ala2 is subject to N-acetylalanine. Thr156 is modified (phosphothreonine). Positions 178–458 (QQRRLKDQDQ…SGDVQVTEDA (281 aa)) are disordered. Positions 210–225 (LEDDLEMSSDDSEASG) are enriched in acidic residues. 4 positions are modified to phosphoserine: Ser217, Ser218, Ser221, and Ser224. The segment covering 232 to 251 (PKAKKKAPPSKGGRKKKKKK) has biased composition (basic residues). Acidic residues-rich tracts occupy residues 255-270 (DEAF…EGQE) and 303-325 (EQSE…EEEE). Residue Thr331 is modified to Phosphothreonine. Positions 343 to 355 (EESDSSEESDIDS) are enriched in acidic residues. The segment covering 364 to 374 (AKKKTPPKRER) has biased composition (basic residues). 4 positions are modified to phosphoserine: Ser377, Ser380, Ser381, and Ser385. Over residues 377 to 391 (SGGSSRGNSRPGTPS) the composition is skewed to low complexity. Position 389 is a phosphothreonine (Thr389). A Phosphoserine modification is found at Ser391. Residues 392–401 (TEAGSTSSTL) show a composition bias toward polar residues. Lys407 carries the post-translational modification N6-acetyllysine. Residues 428–452 (GPQSLSGKSTPQPQSGKSTPSSGDV) are compositionally biased toward polar residues. 3 positions are modified to phosphoserine: Ser431, Ser433, and Ser436. Residues Thr437 and Thr446 each carry the phosphothreonine modification. Ser449 is subject to Phosphoserine.

The protein belongs to the TFIIF alpha subunit family. In terms of assembly, heterodimer of an alpha and a beta subunit. Interacts with GTF2F2, CTDP1, TAF6/TAFII80 and URI1. Interacts with GTF2B (via C-terminus and preferentially via acetylated form); this interaction prevents binding of GTF2B to GTF2F2. Part of TBP-based Pol II pre-initiation complex (PIC), in which Pol II core assembles with general transcription factors and other specific initiation factors including GTF2E1, GTF2E2, GTF2F1, GTF2F2, TCEA1, ERCC2, ERCC3, GTF2H2, GTF2H3, GTF2H4, GTF2H5, GTF2A1, GTF2A2, GTF2B and TBP; this large multi-subunit PIC complex mediates DNA unwinding and targets Pol II core to the transcription start site where the first phosphodiester bond forms. In terms of processing, phosphorylated on Ser and other residues by TAF1 and casein kinase II-like kinases.

Its subcellular location is the nucleus. TFIIF is a general transcription initiation factor that binds to RNA polymerase II and helps to recruit it to the initiation complex in collaboration with TFIIB. It promotes transcription elongation. The protein is General transcription factor IIF subunit 1 (GTF2F1) of Bos taurus (Bovine).